Reading from the N-terminus, the 110-residue chain is Small ribosomal subunit protein uS10m (110 aa).

Belongs to the universal ribosomal protein uS10 family.

It localises to the mitochondrion. The protein is Small ribosomal subunit protein uS10m (RPS10) of Pisum sativum (Garden pea).